The sequence spans 134 residues: SNAPIN protein homolog (134 aa).

Residues Gln50–Leu124 adopt a coiled-coil conformation.

This sequence belongs to the SNAPIN family. As to quaternary structure, component of the biogenesis of lysosome-related organelles complex-1 (BLOC-1) composed of Blos1, Blos2, Blos3, Blos4, Dysb, Muted, Pldn and Snapin. Interacts with Blos2 and Dysb.

The protein resides in the membrane. It localises to the cytoplasm. It is found in the cytosol. Its function is as follows. Component of the biogenesis of lysosome-related organelles complex-1 (BLOC-1) involved in pigment granule biogenesis. May participate in the coupling of lysosomes to microtubule plus-end-directed kinesin motor. The chain is SNAPIN protein homolog from Drosophila melanogaster (Fruit fly).